The chain runs to 1051 residues: Helicase POLQ-like (1051 aa).

The segment covering 1-10 (MANKHNLCKK) has biased composition (basic residues). Disordered stretches follow at residues 1-28 (MANK…AKRQ) and 61-112 (LFGT…APTD). Composition is skewed to polar residues over residues 64–78 (TQAT…QSGS) and 89–102 (SFPS…NSAS). Positions 103 to 112 (KPDEASAPTD) are enriched in basic and acidic residues. In terms of domain architecture, Helicase ATP-binding spans 274 to 446 (LPAIRQRKNL…FLNADVYTRG (173 aa)). 287-294 (LPTSGGKT) contributes to the ATP binding site. Positions 391-394 (DELH) match the DEAH box motif. In terms of domain architecture, Helicase C-terminal spans 497-689 (HLAGLISECA…NEAVGLQSLI (193 aa)).

This sequence belongs to the helicase family. SKI2 subfamily.

It localises to the nucleus. The protein localises to the chromosome. The enzyme catalyses Couples ATP hydrolysis with the unwinding of duplex DNA by translocating in the 3'-5' direction.. It catalyses the reaction ATP + H2O = ADP + phosphate + H(+). Functionally, single-stranded 3'-5' DNA helicase that plays a key role in homology-driven double-strand break (DSB) repair. Involved in different DSB repair mechanisms that are guided by annealing of extensive stretches of complementary bases at break ends, such as microhomology-mediated end-joining (MMEJ), single-strand annealing (SSA) or synthesis-dependent strand annealing (SDSA). This chain is Helicase POLQ-like, found in Drosophila melanogaster (Fruit fly).